Reading from the N-terminus, the 198-residue chain is Myb-related protein 340 (198 aa).

2 consecutive HTH myb-type domains span residues 10-62 (DVEV…LNYL) and 63-117 (RPDV…IQKH). 2 consecutive DNA-binding regions (H-T-H motif) follow at residues 38-62 (WNTI…LNYL) and 90-113 (WSKI…NRTR).

As to expression, expressed only in flowers.

Its subcellular location is the nucleus. In terms of biological role, transcription factor. The chain is Myb-related protein 340 from Antirrhinum majus (Garden snapdragon).